Here is a 235-residue protein sequence, read N- to C-terminus: Large ribosomal subunit protein uL3 (235 aa).

N5-methylglutamine is present on Q151.

This sequence belongs to the universal ribosomal protein uL3 family. In terms of assembly, part of the 50S ribosomal subunit. Forms a cluster with proteins L14 and L19. Methylated by PrmB.

Functionally, one of the primary rRNA binding proteins, it binds directly near the 3'-end of the 23S rRNA, where it nucleates assembly of the 50S subunit. The sequence is that of Large ribosomal subunit protein uL3 from Rhodospirillum rubrum (strain ATCC 11170 / ATH 1.1.1 / DSM 467 / LMG 4362 / NCIMB 8255 / S1).